A 245-amino-acid chain; its full sequence is Ribosomal RNA small subunit methyltransferase G (245 aa).

S-adenosyl-L-methionine-binding positions include G85, F90, 108-110 (DST), 136-137 (AE), and R155.

It belongs to the methyltransferase superfamily. RNA methyltransferase RsmG family.

The protein resides in the cytoplasm. Functionally, specifically methylates the N7 position of a guanine in 16S rRNA. In Trichormus variabilis (strain ATCC 29413 / PCC 7937) (Anabaena variabilis), this protein is Ribosomal RNA small subunit methyltransferase G.